The chain runs to 388 residues: Protein TsgA homolog (388 aa).

12 helical membrane passes run 11–31 (WISF…GMIM), 50–70 (TFLN…IEII), 77–97 (IFSF…NSIF), 101–121 (INMF…TFII), 133–153 (LLLL…IVTA), 160–180 (IIWY…FLLT), 206–226 (VFLL…FISW), 244–264 (SLVS…SFII), 268–288 (NLYR…YCFI), 298–318 (YIII…ITLA), 332–352 (LILL…SPIV), and 360–380 (TLIS…LIYF).

This sequence belongs to the major facilitator superfamily. TsgA family.

It localises to the cell membrane. The chain is Protein TsgA homolog from Buchnera aphidicola subsp. Acyrthosiphon pisum (strain Tuc7).